The primary structure comprises 250 residues: Aquaporin TIP1-1 (250 aa).

2 consecutive transmembrane segments (helical) span residues 24-44 and 56-76; these read FAEF…GMAF and AGLI…VSVG. The NPA 1 motif lies at 85–87; it reads NPA. Transmembrane regions (helical) follow at residues 104–126, 143–163, and 172–192; these read LLYW…FSTG, ALVL…ATAV, and TIAP…GGAF. An NPA 2 motif is present at residues 198–200; sequence NPA. Residues 218 to 238 traverse the membrane as a helical segment; sequence YWVGPLIGGGLAGVIYELLFI.

This sequence belongs to the MIP/aquaporin (TC 1.A.8) family. TIP (TC 1.A.8.10) subfamily. Expressed in roots, shoots, leaves, tassels, ears and embryos. Expressed in meristems and zones of cell enlargement: tips of primary and lateral roots, leaf primordia, and male and female inflorescence meristems. Highly expressed in the root epidermis and endodermis, parenchyma cells surrounding mature xylem vessels in the root and the stem, phloem companion cells and a ring of cells around the phloem strand in the stem and the leaf sheath, and the basal endosperm transfer cells in developing kernels.

The protein resides in the vacuole membrane. In terms of biological role, water channel required to facilitate the transport of water across cell membrane. May support the rapid influx of water into vacuoles during cell expansion, permit osmotic equilibration between the cytosol and the vacuolar content and rapid transcellular water flow through living cells. Its function is impaired by Hg(2+). This Zea mays (Maize) protein is Aquaporin TIP1-1 (TIP1-1).